Here is a 522-residue protein sequence, read N- to C-terminus: Transcription factor SPT20 homolog (522 aa).

The residue at position 284 (Ser284) is a Phosphoserine. Disordered stretches follow at residues 361 to 380 (DEESDSQMSPSHSSTDDHSN) and 408 to 522 (PVKM…RHES). The segment covering 412–425 (SHSSSGSASLSQVS) has biased composition (low complexity). Polar residues predominate over residues 433-442 (TETVSVQSSV). A compositionally biased stretch (low complexity) spans 458-467 (SSSGNSSSGN). A compositionally biased stretch (pro residues) spans 481–492 (PTPPPSSKPPTI). The residue at position 482 (Thr482) is a Phosphothreonine. The span at 506 to 522 (LSPAALSPASSSQRHES) shows a compositional bias: low complexity. A phosphoserine mark is found at Ser507 and Ser512.

Belongs to the SPT20 family. Interacts with ATG9A. Interacts with MAPK14.

Functionally, required for MAP kinase p38 (MAPK11, MAPK12, MAPK13 and/or MAPK14) activation during gastrulation. Required for down-regulation of E-cadherin during gastrulation by regulating E-cadherin protein level downstream from NCK-interacting kinase (NIK) and independently of the regulation of transcription by FGF signaling and Snail. Required for starvation-induced ATG9A trafficking during autophagy. This is Transcription factor SPT20 homolog (SUPT20H) from Pongo abelii (Sumatran orangutan).